Consider the following 388-residue polypeptide: Succinate--CoA ligase [ADP-forming] subunit beta (388 aa).

One can recognise an ATP-grasp domain in the interval 9-244 (KEILRKFGVA…LDEEDPAEIE (236 aa)). ATP contacts are provided by residues Lys-46, 53–55 (GRG), Glu-99, Ala-102, and Glu-107. Mg(2+)-binding residues include Asn-199 and Asp-213. Substrate contacts are provided by residues Asn-264 and 321-323 (GIM).

This sequence belongs to the succinate/malate CoA ligase beta subunit family. In terms of assembly, heterotetramer of two alpha and two beta subunits. Requires Mg(2+) as cofactor.

The catalysed reaction is succinate + ATP + CoA = succinyl-CoA + ADP + phosphate. The enzyme catalyses GTP + succinate + CoA = succinyl-CoA + GDP + phosphate. It participates in carbohydrate metabolism; tricarboxylic acid cycle; succinate from succinyl-CoA (ligase route): step 1/1. In terms of biological role, succinyl-CoA synthetase functions in the citric acid cycle (TCA), coupling the hydrolysis of succinyl-CoA to the synthesis of either ATP or GTP and thus represents the only step of substrate-level phosphorylation in the TCA. The beta subunit provides nucleotide specificity of the enzyme and binds the substrate succinate, while the binding sites for coenzyme A and phosphate are found in the alpha subunit. This is Succinate--CoA ligase [ADP-forming] subunit beta from Burkholderia mallei (strain NCTC 10247).